Reading from the N-terminus, the 257-residue chain is Protein YIPF5 (257 aa).

Residues 1-124 (MSGFENLNTD…KVADGSIMNE (124 aa)) lie on the Cytoplasmic side of the membrane. The interaction with Sec23 stretch occupies residues 75–106 (PASPQPFYGNSFEDEPPLLEELGINFDHIWQK). Residues 125-145 (TDLAGPMVFCLAFGATLLLAG) form a helical membrane-spanning segment. Residue Lys-146 is a topological domain, lumenal. A helical membrane pass occupies residues 147–167 (IQFGYVYGISAIGCLGMFCLL). The Cytoplasmic segment spans residues 168 to 173 (NLMSMT). Residues 174-194 (GVSFGCVASVLGYCLLPMILL) traverse the membrane as a helical segment. Topologically, residues 195 to 196 (SS) are lumenal. A helical transmembrane segment spans residues 197–217 (FAVIFSLQGMVGIILTAGIIG). The Cytoplasmic portion of the chain corresponds to 218–236 (WCSFSASKIFISALAMEGQ). Residues 237-257 (QLLVAYPCALLYGVFALISVF) traverse the membrane as a helical segment.

This sequence belongs to the YIP1 family. Interacts with the COPII coat components Sec23 (SEC23A and/or SEC23B) and Sec24 (SEC24A and/or SEC24B). Interacts with YIF1A. May interact with RAB1A. Interacts with YIPF3 and YIPF4.

It localises to the endoplasmic reticulum membrane. The protein localises to the golgi apparatus. Its subcellular location is the cis-Golgi network membrane. It is found in the cytoplasmic vesicle. The protein resides in the COPII-coated vesicle. Plays a role in transport between endoplasmic reticulum and Golgi. In pancreatic beta cells, required to transport proinsulin from endoplasmic reticulum into the Golgi. This Macaca fascicularis (Crab-eating macaque) protein is Protein YIPF5 (YIPF5).